A 164-amino-acid polypeptide reads, in one-letter code: Lipoprotein signal peptidase (164 aa).

3 helical membrane passes run 12 to 32 (WLWL…LILQ), 70 to 90 (WFFA…MYRS), and 102 to 122 (ALII…GFVV). Residues D123 and D141 contribute to the active site. A helical membrane pass occupies residues 137-157 (FNLADTAICVGAALIVLEGFL).

This sequence belongs to the peptidase A8 family.

The protein localises to the cell inner membrane. It carries out the reaction Release of signal peptides from bacterial membrane prolipoproteins. Hydrolyzes -Xaa-Yaa-Zaa-|-(S,diacylglyceryl)Cys-, in which Xaa is hydrophobic (preferably Leu), and Yaa (Ala or Ser) and Zaa (Gly or Ala) have small, neutral side chains.. Its pathway is protein modification; lipoprotein biosynthesis (signal peptide cleavage). Functionally, this protein specifically catalyzes the removal of signal peptides from prolipoproteins. The chain is Lipoprotein signal peptidase from Escherichia coli O157:H7.